A 327-amino-acid chain; its full sequence is Succinylglutamate desuccinylase (327 aa).

Residues histidine 53, glutamate 56, and histidine 146 each coordinate Zn(2+). The active site involves glutamate 209.

The protein belongs to the AspA/AstE family. Succinylglutamate desuccinylase subfamily. Zn(2+) serves as cofactor.

It catalyses the reaction N-succinyl-L-glutamate + H2O = L-glutamate + succinate. It participates in amino-acid degradation; L-arginine degradation via AST pathway; L-glutamate and succinate from L-arginine: step 5/5. Its function is as follows. Transforms N(2)-succinylglutamate into succinate and glutamate. This Serratia proteamaculans (strain 568) protein is Succinylglutamate desuccinylase.